Consider the following 396-residue polypeptide: 1-deoxy-D-xylulose 5-phosphate reductoisomerase (396 aa).

Residues threonine 15, glycine 16, serine 17, isoleucine 18, glycine 41, and asparagine 130 each contribute to the NADPH site. Lysine 131 contributes to the 1-deoxy-D-xylulose 5-phosphate binding site. Residue glutamate 132 coordinates NADPH. Aspartate 155 provides a ligand contact to Mn(2+). 1-deoxy-D-xylulose 5-phosphate contacts are provided by serine 156, glutamate 157, serine 181, and histidine 204. Mn(2+) is bound at residue glutamate 157. Glycine 210 is an NADPH binding site. The 1-deoxy-D-xylulose 5-phosphate site is built by serine 217, asparagine 222, lysine 223, and glutamate 226. Glutamate 226 contributes to the Mn(2+) binding site.

It belongs to the DXR family. The cofactor is Mg(2+). It depends on Mn(2+) as a cofactor.

The enzyme catalyses 2-C-methyl-D-erythritol 4-phosphate + NADP(+) = 1-deoxy-D-xylulose 5-phosphate + NADPH + H(+). It functions in the pathway isoprenoid biosynthesis; isopentenyl diphosphate biosynthesis via DXP pathway; isopentenyl diphosphate from 1-deoxy-D-xylulose 5-phosphate: step 1/6. Functionally, catalyzes the NADPH-dependent rearrangement and reduction of 1-deoxy-D-xylulose-5-phosphate (DXP) to 2-C-methyl-D-erythritol 4-phosphate (MEP). This chain is 1-deoxy-D-xylulose 5-phosphate reductoisomerase, found in Bifidobacterium longum (strain NCC 2705).